The chain runs to 122 residues: Small ribosomal subunit protein uS13 (122 aa).

The interval 95–122 is disordered; sequence GLPVRGQKTKTNARTRKGPKRTVANKKK.

Belongs to the universal ribosomal protein uS13 family. In terms of assembly, part of the 30S ribosomal subunit. Forms a loose heterodimer with protein S19. Forms two bridges to the 50S subunit in the 70S ribosome.

Located at the top of the head of the 30S subunit, it contacts several helices of the 16S rRNA. In the 70S ribosome it contacts the 23S rRNA (bridge B1a) and protein L5 of the 50S subunit (bridge B1b), connecting the 2 subunits; these bridges are implicated in subunit movement. Contacts the tRNAs in the A and P-sites. This Lachnoclostridium phytofermentans (strain ATCC 700394 / DSM 18823 / ISDg) (Clostridium phytofermentans) protein is Small ribosomal subunit protein uS13.